The following is a 94-amino-acid chain: Large ribosomal subunit protein eL42 (94 aa).

Zn(2+) contacts are provided by Cys-11, Cys-14, Cys-71, and Cys-74. The C4-type zinc finger occupies 11–74; it reads CPFCKKHTIH…LDLRFRCTEC (64 aa).

It belongs to the eukaryotic ribosomal protein eL42 family. As to quaternary structure, part of the 50S ribosomal subunit. Zn(2+) serves as cofactor.

Functionally, binds to the 23S rRNA. The protein is Large ribosomal subunit protein eL42 of Pyrococcus furiosus (strain ATCC 43587 / DSM 3638 / JCM 8422 / Vc1).